A 219-amino-acid polypeptide reads, in one-letter code: 7-cyano-7-deazaguanine synthase (219 aa).

ATP is bound at residue 11–21 (FSGGQDSTTCL). Positions 188, 196, 199, and 202 each coordinate Zn(2+).

It belongs to the QueC family. Zn(2+) serves as cofactor.

It carries out the reaction 7-carboxy-7-deazaguanine + NH4(+) + ATP = 7-cyano-7-deazaguanine + ADP + phosphate + H2O + H(+). The protein operates within purine metabolism; 7-cyano-7-deazaguanine biosynthesis. Catalyzes the ATP-dependent conversion of 7-carboxy-7-deazaguanine (CDG) to 7-cyano-7-deazaguanine (preQ(0)). The protein is 7-cyano-7-deazaguanine synthase of Glaesserella parasuis serovar 5 (strain SH0165) (Haemophilus parasuis).